The sequence spans 514 residues: ATP synthase subunit alpha (514 aa).

170–177 (GDRQTGKT) is a binding site for ATP.

Belongs to the ATPase alpha/beta chains family. In terms of assembly, F-type ATPases have 2 components, CF(1) - the catalytic core - and CF(0) - the membrane proton channel. CF(1) has five subunits: alpha(3), beta(3), gamma(1), delta(1), epsilon(1). CF(0) has three main subunits: a(1), b(2) and c(9-12). The alpha and beta chains form an alternating ring which encloses part of the gamma chain. CF(1) is attached to CF(0) by a central stalk formed by the gamma and epsilon chains, while a peripheral stalk is formed by the delta and b chains.

The protein localises to the cell inner membrane. The enzyme catalyses ATP + H2O + 4 H(+)(in) = ADP + phosphate + 5 H(+)(out). Functionally, produces ATP from ADP in the presence of a proton gradient across the membrane. The alpha chain is a regulatory subunit. In Psychrobacter sp. (strain PRwf-1), this protein is ATP synthase subunit alpha.